Here is a 320-residue protein sequence, read N- to C-terminus: Flavonol 4'-sulfotransferase (320 aa).

Residue 69-74 (KSGTTW) coordinates 3'-phosphoadenylyl sulfate. H129 serves as the catalytic Proton acceptor. 3'-phosphoadenylyl sulfate-binding positions include R151, S159, Y217, and 285 to 287 (RKA).

It belongs to the sulfotransferase 1 family. Highest in shoot tips and lowest in mature leaves and roots.

The protein resides in the cytoplasm. It catalyses the reaction quercetin 3-sulfate + 3'-phosphoadenylyl sulfate = quercetin 3,4'-bissulfate + adenosine 3',5'-bisphosphate + H(+). Its activity is regulated as follows. No requirement for divalent cations and insensitive to p-chloromercuribenzoate, iodoacetate, or iodoacetamide. Its function is as follows. Sulfotransferase that utilizes 3'-phospho-5'-adenylyl sulfate (PAPS) as sulfonate donor to catalyze the sulfate conjugation of quercetin 3-sulfate &gt; kaempferol 3-sulfate &gt; isorhamnetin 3-sulfate &gt; patuletin 3-sulfate, but not tamarixetin 3-sulfate. O-sulfation of position 4' of flavonol. May play a role in auxin transport. The protein is Flavonol 4'-sulfotransferase of Flaveria chlorifolia (Clasping yellowtops).